The sequence spans 443 residues: MTRKYFGTDGIRGTVGQPPITPDFVLRLAHAVGRVLRRVESRPTVLIGKDTRISGYMLESALESGFNSAGVDVVLLGPLPTPGVAYLTRAQRASLGVVISASHNAYPDNGIKFFSAQGTKLSDEWELAVEAALEEPPVWVDSATLGKARRLDDAAGRYIEFCKSTFAHDLTLKGLKIVVDGAHGAAYHIAPKVFHELGAEVIAIGCAPDGLNINHEVGATHPEALITAVKANQADYGIALDGDADRLQMVDADGRLFNGDEVLFLMVSERLARGEKVPGTVGTLMTNMAVELALKSRGVEFVRAKVGDRYVLEELEKRGWLLGGEGSGHLLALDKHTTGDGLISALQVLQACVRSGKTIAQLLGDVVLFPQTLVNVRLKPGQDWKASEKLALETKAVEAELGDTGRLLIRASGTEPLLRVMVEARDARQAKACAERVADTVRS.

Ser-102 serves as the catalytic Phosphoserine intermediate. Residues Ser-102, Asp-241, Asp-243, and Asp-245 each contribute to the Mg(2+) site. Position 102 is a phosphoserine (Ser-102).

It belongs to the phosphohexose mutase family. It depends on Mg(2+) as a cofactor. In terms of processing, activated by phosphorylation.

It catalyses the reaction alpha-D-glucosamine 1-phosphate = D-glucosamine 6-phosphate. Catalyzes the conversion of glucosamine-6-phosphate to glucosamine-1-phosphate. The protein is Phosphoglucosamine mutase of Polaromonas sp. (strain JS666 / ATCC BAA-500).